The primary structure comprises 324 residues: Beta-ketoacyl-[acyl-carrier-protein] synthase III (324 aa).

Active-site residues include Cys112 and His249. Residues Gln250 to Arg254 form an ACP-binding region. The active site involves Asn279.

This sequence belongs to the thiolase-like superfamily. FabH family. Homodimer.

The protein resides in the cytoplasm. It catalyses the reaction malonyl-[ACP] + acetyl-CoA + H(+) = 3-oxobutanoyl-[ACP] + CO2 + CoA. It participates in lipid metabolism; fatty acid biosynthesis. Its function is as follows. Catalyzes the condensation reaction of fatty acid synthesis by the addition to an acyl acceptor of two carbons from malonyl-ACP. Catalyzes the first condensation reaction which initiates fatty acid synthesis and may therefore play a role in governing the total rate of fatty acid production. Possesses both acetoacetyl-ACP synthase and acetyl transacylase activities. Its substrate specificity determines the biosynthesis of branched-chain and/or straight-chain of fatty acids. The polypeptide is Beta-ketoacyl-[acyl-carrier-protein] synthase III (Streptococcus pyogenes serotype M4 (strain MGAS10750)).